A 398-amino-acid polypeptide reads, in one-letter code: AT-rich interactive domain-containing protein 6 (398 aa).

The segment at 25–87 (EPLEPENDHN…PKTEGENAKK (63 aa)) is disordered. The ARID domain maps to 106–197 (PVEQVAFLRE…ALLEYEKCLR (92 aa)). Positions 213–236 (SSVEKEPSSHQGSGSGRARRDSAA) are disordered. Residues 305–398 (VGPVADWVKI…RLFIRVPFEQ (94 aa)) form the sHSP domain.

The protein belongs to the small heat shock protein (HSP20) family.

It localises to the nucleus. In Arabidopsis thaliana (Mouse-ear cress), this protein is AT-rich interactive domain-containing protein 6 (ARID6).